A 144-amino-acid chain; its full sequence is Large ribosomal subunit protein uL11 (144 aa).

The protein belongs to the universal ribosomal protein uL11 family. In terms of assembly, part of the ribosomal stalk of the 50S ribosomal subunit. Interacts with L10 and the large rRNA to form the base of the stalk. L10 forms an elongated spine to which L12 dimers bind in a sequential fashion forming a multimeric L10(L12)X complex. Post-translationally, one or more lysine residues are methylated.

Functionally, forms part of the ribosomal stalk which helps the ribosome interact with GTP-bound translation factors. This chain is Large ribosomal subunit protein uL11, found in Granulibacter bethesdensis (strain ATCC BAA-1260 / CGDNIH1).